A 497-amino-acid chain; its full sequence is IWS1-like protein (497 aa).

The disordered stretch occupies residues 1-191; it reads MSDHEGASPA…SDRRGGRNFE (191 aa). Low complexity-rich tracts occupy residues 7-23 and 47-57; these read ASPASSAPSSPLVPVSP and PLAPRSPASPR. 3 stretches are compositionally biased toward basic and acidic residues: residues 123 to 134, 144 to 160, and 181 to 191; these read EGDKQQKRKDLF, DRPKKQNDDLDELVKGD, and PSDRRGGRNFE. The region spanning 281-361 is the TFIIS N-terminal domain; the sequence is SALSEWLAPL…GEWARPIYHL (81 aa). A disordered region spans residues 369-433; that stretch reads SRQEREERDY…GDKGYINRAR (65 aa). 2 stretches are compositionally biased toward basic and acidic residues: residues 370 to 382 and 401 to 411; these read RQEREERDYSRMP and APKRPRIRDAE.

This sequence belongs to the IWS1 family.

The protein localises to the nucleus. This chain is IWS1-like protein, found in Caenorhabditis briggsae.